A 119-amino-acid polypeptide reads, in one-letter code: Large ribosomal subunit protein uL18 (119 aa).

The protein belongs to the universal ribosomal protein uL18 family. As to quaternary structure, part of the 50S ribosomal subunit; part of the 5S rRNA/L5/L18/L25 subcomplex. Contacts the 5S and 23S rRNAs.

Functionally, this is one of the proteins that bind and probably mediate the attachment of the 5S RNA into the large ribosomal subunit, where it forms part of the central protuberance. The polypeptide is Large ribosomal subunit protein uL18 (Clostridium botulinum (strain Alaska E43 / Type E3)).